We begin with the raw amino-acid sequence, 232 residues long: Chalcone synthase (232 aa).

Residue cysteine 7 is part of the active site.

This sequence belongs to the thiolase-like superfamily. Chalcone/stilbene synthases family.

It catalyses the reaction (E)-4-coumaroyl-CoA + 3 malonyl-CoA + 3 H(+) = 2',4,4',6'-tetrahydroxychalcone + 3 CO2 + 4 CoA. The protein operates within secondary metabolite biosynthesis; flavonoid biosynthesis. In terms of biological role, the primary product of this enzyme is 4,2',4',6'-tetrahydroxychalcone (also termed naringenin-chalcone or chalcone) which can under specific conditions spontaneously isomerize into naringenin. The protein is Chalcone synthase (CHS) of Malus domestica (Apple).